The following is a 393-amino-acid chain: Phosphoglycerate kinase (393 aa).

Substrate is bound by residues 22-24, Arg-37, 60-63, Arg-119, and Arg-152; these read DFN and HLGR. ATP contacts are provided by residues Lys-202, Gly-293, Glu-324, and 350–353; that span reads GGDS.

This sequence belongs to the phosphoglycerate kinase family. Monomer.

Its subcellular location is the cytoplasm. The enzyme catalyses (2R)-3-phosphoglycerate + ATP = (2R)-3-phospho-glyceroyl phosphate + ADP. It participates in carbohydrate degradation; glycolysis; pyruvate from D-glyceraldehyde 3-phosphate: step 2/5. This Borrelia garinii subsp. bavariensis (strain ATCC BAA-2496 / DSM 23469 / PBi) (Borreliella bavariensis) protein is Phosphoglycerate kinase.